Consider the following 519-residue polypeptide: S-type anion channel SLAH2 (519 aa).

A disordered region spans residues 1–31 (MNNPRSVSPLVSPANHSDLLENQRQSGSGDF). The Cytoplasmic segment spans residues 1–140 (MNNPRSVSPL…LPEDKTWPFL (140 aa)). Polar residues predominate over residues 20–29 (LENQRQSGSG). Phosphoserine is present on residues S77 and S85. A helical transmembrane segment spans residues 141-161 (LRFPITSYGMCLGVSSQAIMW). Over 162 to 185 (KTLATTEAEKFLHVTQVINHVLWW) the chain is Extracellular. The helical transmembrane segment at 186–206 (ISLLLLLAVSITYLFKTILFF) threads the bilayer. At 207–220 (EAVRREFRHPIRVN) the chain is on the cytoplasmic side. Residues 221 to 241 (FFFAPLISILFLALGIPHSII) form a helical membrane-spanning segment. The Extracellular portion of the chain corresponds to 242-247 (SHLPST). A helical transmembrane segment spans residues 248–268 (LWYFLMAPILFLEMKIYGQWM). Residues 269–281 (SGGQRRLSKVANP) lie on the Cytoplasmic side of the membrane. A helical membrane pass occupies residues 282 to 302 (TNHLSIVGNFAGALLGASMGL). Residues 303–304 (KE) are Extracellular-facing. Residues 305–325 (GPIFFFAIGLAYYLVLFVTLY) traverse the membrane as a helical segment. The Cytoplasmic segment spans residues 326–340 (QRLPTNETLPKELHP). Residues 341 to 361 (VFFLFVAAPAVASMAWTKISA) traverse the membrane as a helical segment. A topological domain (extracellular) is located at residue S362. A helical membrane pass occupies residues 363 to 383 (FDLGSRLAYFISLFLYFSLVC). The Cytoplasmic segment spans residues 384–389 (RINLFR). Residues 390–410 (GFKFSLAWWAYTFPMTAVASA) form a helical membrane-spanning segment. Topologically, residues 411-424 (TIKYSDEVTGVATK) are extracellular. Residues 425–445 (ILSVVMSGAATLTVIAVLGLT) form a helical membrane-spanning segment. Residues 446 to 519 (VMHAFVQRDL…VDSSTVQNSN (74 aa)) are Cytoplasmic-facing. The segment at 495 to 519 (PEDNQIDLESPPLVNVDSSTVQNSN) is disordered. Over residues 510–519 (VDSSTVQNSN) the composition is skewed to polar residues.

It belongs to the SLAC1 S-type anion channel family. Homotrimer. As to expression, expressed in lateral root primordia and tap root tips.

The protein localises to the cell membrane. In terms of biological role, slow, weak voltage-dependent S-type anion efflux channel involved in maintenance of anion homeostasis. This Arabidopsis thaliana (Mouse-ear cress) protein is S-type anion channel SLAH2 (SLAH2).